The sequence spans 424 residues: MGCGTSKVLPEPPKDVQLDLVKKVEPFSGTKNDVYKHFITEVDSVGPLKAGFPATSQYAPPCPGVPNTGHTAPPSEPPRRARVAKYRAKFDPRVTAKYDIKALIGRGSFSRVVRVEHRATRQPYAIKMIETKYREGREVCESELRVLRRVRHANIIQLVEVFETQERVYMVMELATGGELFDRIIAKGSFTERDATRVLQMVLDGVRYLHALGITHRDLKPENLLYYHPGTDSKIIITDFGLASARKKGDDCLMKTTCGTPEYIAPEVLVRKPYTNSVDMWALGVIAYILLSGTMPFEDDNRTRLYRQILRGKYSYLGEPWPSVSNLAKDFIDRLLTVDPGARMTALQALRHPWVVSMAASSSMKNLHRSISQNLLKRASSRCQSTKSSQSTRSSRSTRSNKSRRVRERELRELNLRYQQQYNG.

The N-myristoyl glycine moiety is linked to residue glycine 2. Residue cysteine 3 is the site of S-palmitoyl cysteine attachment. Residues 59–79 (APPCPGVPNTGHTAPPSEPPR) are disordered. The Protein kinase domain maps to 98 to 355 (YDIKALIGRG…ALQALRHPWV (258 aa)). ATP is bound by residues 104–112 (IGRGSFSRV) and lysine 127. The active-site Proton acceptor is the aspartate 218. The tract at residues 378-408 (RASSRCQSTKSSQSTRSSRSTRSNKSRRVRE) is disordered. A phosphoserine; by autocatalysis mark is found at serine 380 and serine 381. The span at 381–398 (SRCQSTKSSQSTRSSRST) shows a compositional bias: low complexity.

It belongs to the protein kinase superfamily. CAMK Ser/Thr protein kinase family. As to quaternary structure, homodimer. Autophosphorylated on serine residues. In terms of processing, myristoylated. Required for membrane association. Prerequisite for palmitoylation to occur. Post-translationally, palmitoylated.

The protein resides in the golgi apparatus. The protein localises to the cytoplasm. It is found in the cytoskeleton. It localises to the microtubule organizing center. Its subcellular location is the centrosome. The protein resides in the nucleus speckle. The protein localises to the endoplasmic reticulum membrane. It is found in the cell membrane. It carries out the reaction L-seryl-[protein] + ATP = O-phospho-L-seryl-[protein] + ADP + H(+). It catalyses the reaction L-threonyl-[protein] + ATP = O-phospho-L-threonyl-[protein] + ADP + H(+). With respect to regulation, activity depends on Ca(2+) concentration. Serine/threonine protein kinase that may be involved in the regulation of pre-mRNA processing. It may phosphorylate components of nuclear splice factor compartments (SFC), such as non-snRNP splicing factors containing a serine/arginine-rich domain (SR proteins). Reversible phosphorylation of SR proteins may cause their release into the nucleoplasm and change their local concentration, thereby influencing alternative splicing. This chain is Serine/threonine-protein kinase H1 (Pskh1), found in Mus musculus (Mouse).